Reading from the N-terminus, the 288-residue chain is Pteridine reductase 1 (288 aa).

An NADP(+)-binding site is contributed by 17 to 40 (RLGRSIAEGLHAEGYAVCLHYHRS). Residue Ser175 participates in substrate binding. The active-site Proton acceptor is Tyr194.

This sequence belongs to the short-chain dehydrogenases/reductases (SDR) family. Homotetramer.

The catalysed reaction is (6R)-L-erythro-5,6,7,8-tetrahydrobiopterin + 2 NADP(+) = L-erythro-biopterin + 2 NADPH + 2 H(+). Its pathway is cofactor biosynthesis; tetrahydrobiopterin biosynthesis; tetrahydrobiopterin from biopterin: step 1/1. Exhibits a NADPH-dependent biopterin reductase activity. Has good activity with folate and significant activity with dihydrofolate and dihydrobiopterin, but not with quinonoid dihydrobiopterin. Confers resistance to methotrexate (MTX). This Leishmania major protein is Pteridine reductase 1 (PTR1).